A 359-amino-acid polypeptide reads, in one-letter code: Pyruvate dehydrogenase E1 component subunit beta, mitochondrial (359 aa).

Residues 1 to 30 (MAAVSGLVRRPLREVSGLLKRRFHWTAPAA) constitute a mitochondrion transit peptide. Tyrosine 67 is subject to Phosphotyrosine. Thiamine diphosphate is bound at residue glutamate 89. Positions 142, 190, 191, 193, and 195 each coordinate K(+). Lysine 354 carries the post-translational modification N6-acetyllysine.

In terms of assembly, heterotetramer of two PDHA1 and two PDHB subunits. The heterotetramer interacts with DLAT, and is part of the multimeric pyruvate dehydrogenase complex that contains multiple copies of pyruvate dehydrogenase (E1), dihydrolipoamide acetyltransferase (DLAT, E2) and lipoamide dehydrogenase (DLD, E3). These subunits are bound to an inner core composed of about 48 DLAT and 12 PDHX molecules. Interacts with DLAT. The cofactor is thiamine diphosphate.

Its subcellular location is the mitochondrion matrix. The enzyme catalyses N(6)-[(R)-lipoyl]-L-lysyl-[protein] + pyruvate + H(+) = N(6)-[(R)-S(8)-acetyldihydrolipoyl]-L-lysyl-[protein] + CO2. The pyruvate dehydrogenase complex catalyzes the overall conversion of pyruvate to acetyl-CoA and CO(2), and thereby links the glycolytic pathway to the tricarboxylic cycle. This chain is Pyruvate dehydrogenase E1 component subunit beta, mitochondrial (PDHB), found in Homo sapiens (Human).